The following is a 334-amino-acid chain: Anthranilate phosphoribosyltransferase (334 aa).

5-phospho-alpha-D-ribose 1-diphosphate-binding positions include G79, 82-83 (GD), S87, 89-92 (NIST), 107-115 (KHGNRSISS), and S119. Position 79 (G79) interacts with anthranilate. Residue S91 participates in Mg(2+) binding. N110 provides a ligand contact to anthranilate. R165 is an anthranilate binding site. The Mg(2+) site is built by D224 and E225.

It belongs to the anthranilate phosphoribosyltransferase family. Homodimer. Requires Mg(2+) as cofactor.

The enzyme catalyses N-(5-phospho-beta-D-ribosyl)anthranilate + diphosphate = 5-phospho-alpha-D-ribose 1-diphosphate + anthranilate. Its pathway is amino-acid biosynthesis; L-tryptophan biosynthesis; L-tryptophan from chorismate: step 2/5. In terms of biological role, catalyzes the transfer of the phosphoribosyl group of 5-phosphorylribose-1-pyrophosphate (PRPP) to anthranilate to yield N-(5'-phosphoribosyl)-anthranilate (PRA). This is Anthranilate phosphoribosyltransferase from Streptococcus pneumoniae (strain 70585).